The sequence spans 39 residues: Large ribosomal subunit protein bL36 (39 aa).

Belongs to the bacterial ribosomal protein bL36 family.

The chain is Large ribosomal subunit protein bL36 from Limosilactobacillus reuteri (strain DSM 20016) (Lactobacillus reuteri).